The sequence spans 662 residues: Acetyl-coenzyme A synthetase (662 aa).

Residues 197-200 and Thr317 each bind CoA; that span reads RKGK. ATP contacts are provided by residues 393 to 395, 417 to 422, Asp510, and Arg525; these read GEP and DTWWQT. Ser533 contacts CoA. Residue Arg536 participates in ATP binding. The Mg(2+) site is built by His549 and Val552. Lys623 carries the N6-acetyllysine modification.

Belongs to the ATP-dependent AMP-binding enzyme family. It depends on Mg(2+) as a cofactor. In terms of processing, acetylated. Deacetylation by the SIR2-homolog deacetylase activates the enzyme.

The enzyme catalyses acetate + ATP + CoA = acetyl-CoA + AMP + diphosphate. Its function is as follows. Catalyzes the conversion of acetate into acetyl-CoA (AcCoA), an essential intermediate at the junction of anabolic and catabolic pathways. AcsA undergoes a two-step reaction. In the first half reaction, AcsA combines acetate with ATP to form acetyl-adenylate (AcAMP) intermediate. In the second half reaction, it can then transfer the acetyl group from AcAMP to the sulfhydryl group of CoA, forming the product AcCoA. This is Acetyl-coenzyme A synthetase from Helicobacter acinonychis (strain Sheeba).